Consider the following 210-residue polypeptide: DNA replication complex GINS protein PSF3 (210 aa).

Belongs to the GINS3/PSF3 family. As to quaternary structure, component of the GINS complex which is a heterotetramer of gins1/psf1, gins2/psf2, gins3/psf3 and gins4/sld5. Component of the CMG helicase complex, composed of the mcm2-7 complex, the GINS complex and cdc45.

The protein resides in the nucleus. It is found in the chromosome. Functionally, required for correct functioning of the GINS complex, a complex that plays an essential role in the initiation of DNA replication, and progression of DNA replication forks. GINS complex is a core component of CDC45-MCM-GINS (CMG) helicase, the molecular machine that unwinds template DNA during replication, and around which the replisome is built. This Xenopus laevis (African clawed frog) protein is DNA replication complex GINS protein PSF3.